The primary structure comprises 345 residues: S-adenosylmethionine:tRNA ribosyltransferase-isomerase (345 aa).

Belongs to the QueA family. Monomer.

The protein resides in the cytoplasm. The catalysed reaction is 7-aminomethyl-7-carbaguanosine(34) in tRNA + S-adenosyl-L-methionine = epoxyqueuosine(34) in tRNA + adenine + L-methionine + 2 H(+). Its pathway is tRNA modification; tRNA-queuosine biosynthesis. Transfers and isomerizes the ribose moiety from AdoMet to the 7-aminomethyl group of 7-deazaguanine (preQ1-tRNA) to give epoxyqueuosine (oQ-tRNA). In Shewanella halifaxensis (strain HAW-EB4), this protein is S-adenosylmethionine:tRNA ribosyltransferase-isomerase.